A 116-amino-acid polypeptide reads, in one-letter code: Large ribosomal subunit protein bL17 (116 aa).

The protein belongs to the bacterial ribosomal protein bL17 family. Part of the 50S ribosomal subunit. Contacts protein L32.

The protein is Large ribosomal subunit protein bL17 of Chloroflexus aggregans (strain MD-66 / DSM 9485).